Reading from the N-terminus, the 309-residue chain is Coproporphyrin III ferrochelatase (309 aa).

Fe-coproporphyrin III contacts are provided by residues Tyr-12, Arg-29, 45 to 46, Ser-53, and Tyr-124; that span reads RY. Fe(2+) is bound by residues His-182 and Glu-263.

The protein belongs to the ferrochelatase family.

It localises to the cytoplasm. It catalyses the reaction Fe-coproporphyrin III + 2 H(+) = coproporphyrin III + Fe(2+). It participates in porphyrin-containing compound metabolism; protoheme biosynthesis. Functionally, involved in coproporphyrin-dependent heme b biosynthesis. Catalyzes the insertion of ferrous iron into coproporphyrin III to form Fe-coproporphyrin III. This chain is Coproporphyrin III ferrochelatase, found in Listeria monocytogenes serotype 4b (strain F2365).